Here is a 229-residue protein sequence, read N- to C-terminus: Endonuclease V (229 aa).

Positions 46 and 114 each coordinate Mg(2+).

Belongs to the endonuclease V family. The cofactor is Mg(2+).

The protein localises to the cytoplasm. The catalysed reaction is Endonucleolytic cleavage at apurinic or apyrimidinic sites to products with a 5'-phosphate.. In terms of biological role, DNA repair enzyme involved in the repair of deaminated bases. Selectively cleaves double-stranded DNA at the second phosphodiester bond 3' to a deoxyinosine leaving behind the intact lesion on the nicked DNA. In Streptomyces avermitilis (strain ATCC 31267 / DSM 46492 / JCM 5070 / NBRC 14893 / NCIMB 12804 / NRRL 8165 / MA-4680), this protein is Endonuclease V.